Consider the following 84-residue polypeptide: U4-theraphotoxin-Hhn1b (84 aa).

An N-terminal signal peptide occupies residues 1 to 22; sequence MKVTLIAILTCAAVLVLHTTAA. The propeptide occupies 23 to 47; it reads EELEESQLMEVGMPDTELAAVDEER. Intrachain disulfides connect Cys-51/Cys-65, Cys-55/Cys-76, and Cys-70/Cys-81.

The protein belongs to the neurotoxin 12 (Hwtx-2) family. 02 (Hwtx-2) subfamily. As to expression, expressed by the venom gland.

It localises to the secreted. Functionally, postsynaptic neurotoxin. In Cyriopagopus hainanus (Chinese bird spider), this protein is U4-theraphotoxin-Hhn1b.